Consider the following 482-residue polypeptide: Alanine aminotransferase 2 (482 aa).

N6-(pyridoxal phosphate)lysine is present on K299.

This sequence belongs to the class-I pyridoxal-phosphate-dependent aminotransferase family. Alanine aminotransferase subfamily. Homodimer. Pyridoxal 5'-phosphate is required as a cofactor.

The catalysed reaction is L-alanine + 2-oxoglutarate = pyruvate + L-glutamate. It functions in the pathway photosynthesis; C4 acid pathway. The protein operates within amino-acid degradation; L-alanine degradation via transaminase pathway; pyruvate from L-alanine: step 1/1. In terms of biological role, transfer of C3 units between the cytosol of mesophyll and bundle sheath cells to maintain a nitrogen-carbon balance in the C4-dicarboxylic pathway. In Hordeum vulgare (Barley), this protein is Alanine aminotransferase 2.